A 121-amino-acid polypeptide reads, in one-letter code: RxLR effector protein PexRD2 (121 aa).

Positions 1-20 (MRLSYVIVVIATSFLVTTEA) are cleaved as a signal peptide. The RxLR-dEER motif lies at 38-56 (RLLRKHYTAAENDDDSEAR). Residues 57–121 (ALNTEKMKTM…LNYVAEHTAV (65 aa)) form a WY domain region.

Belongs to the RxLR effector family. Homodimer. Interacts with host MAPKKK epsilon (via its kinase domain).

It is found in the secreted. The protein resides in the host cytoplasm. The protein localises to the host nucleus. In terms of biological role, effector that enhances P.infestans colonization of Nicotiana benthamiana leaves. Induces a weak Cell death response in N.benthamiana. PexRD2-induced cell death is dependent on SGT1, suggesting that PexRD2 is recognized by the plant immune system. Interacts with the kinase domain of the host MAPKKK epsilon, a positive regulator of cell death associated with plant immunity, and perturbs signaling pathways triggered by MAPKKK epsilon. The polypeptide is RxLR effector protein PexRD2 (Phytophthora infestans (strain T30-4) (Potato late blight agent)).